A 572-amino-acid chain; its full sequence is EF-hand calcium-binding domain-containing protein 12 (572 aa).

2 disordered regions span residues Val62 to Pro85 and Glu146 to Ser169. The EF-hand domain occupies Ser196–Pro231. Residue Glu212 coordinates Ca(2+).

This is EF-hand calcium-binding domain-containing protein 12 (EFCAB12) from Homo sapiens (Human).